A 294-amino-acid chain; its full sequence is Beta-glucoside kinase (294 aa).

5–11 is an ATP binding site; it reads AFDIGGT.

Belongs to the ROK (NagC/XylR) family.

It catalyses the reaction D-cellobiose + ATP = 6-phospho-beta-D-glucosyl-(1-&gt;4)-D-glucose + ADP + H(+). In terms of biological role, catalyzes the ATP-dependent phosphorylation of cellobiose to produce cellobiose-6'-P. May have a dual role of kinase and transcriptional regulator of the cellobiose-PTS operon. In Listeria innocua serovar 6a (strain ATCC BAA-680 / CLIP 11262), this protein is Beta-glucoside kinase (bglK).